The primary structure comprises 275 residues: Large ribosomal subunit protein uL2 (275 aa).

Disordered stretches follow at residues 222–243 (GSVM…PIGR) and 256–275 (GGKT…KRKP).

It belongs to the universal ribosomal protein uL2 family. Part of the 50S ribosomal subunit. Forms a bridge to the 30S subunit in the 70S ribosome.

Its function is as follows. One of the primary rRNA binding proteins. Required for association of the 30S and 50S subunits to form the 70S ribosome, for tRNA binding and peptide bond formation. It has been suggested to have peptidyltransferase activity; this is somewhat controversial. Makes several contacts with the 16S rRNA in the 70S ribosome. The chain is Large ribosomal subunit protein uL2 from Syntrophomonas wolfei subsp. wolfei (strain DSM 2245B / Goettingen).